A 424-amino-acid polypeptide reads, in one-letter code: Folate-like transporter 3 (424 aa).

A glycan (N-linked (GlcNAc...) asparagine) is linked at asparagine 35. Helical transmembrane passes span 55-75, 78-98, 101-119, 136-156, and 164-184; these read VALI…ILII, LSYF…CMQL, LFYG…YIYV, ALLV…GLNW, and IINL…PHVP. The N-linked (GlcNAc...) asparagine glycan is linked to asparagine 254. Transmembrane regions (helical) follow at residues 313-333, 361-381, and 392-412; these read GLLF…CYII, LFGI…AIVI, and FVVY…IFGI.

It belongs to the reduced folate carrier (RFC) transporter (TC 2.A.48) family.

It is found in the membrane. In Caenorhabditis elegans, this protein is Folate-like transporter 3 (folt-3).